Consider the following 285-residue polypeptide: MNKELEIIYQNIANQSELGQSSNYDDHYNPKRLYPIPRAPKRQEINLDPNSTTFYGFDCWNHYEVSWLNSKGKPVVAMAVISYDCHSPCIIESKSLKLYFNSLNNTTFPDVETVVQTISKDLSHCIGSEVAVNVYPLSEIASQTIYAAFDGICLDKLDIECSVYHVMPDFLSTSSELVEEVLYSDLLKSNCLVTNQPDWGSVQIIYKGKKINHEGLLKYLISFRNHNEFHEQCIERIFADIMRFCQPESLTVYGRYTRRGGLDINPIRSTEPCVFDGQNIRLIRQ.

Residue 91 to 93 (IES) coordinates substrate. Residue 93–94 (SK) participates in NADPH binding. Catalysis depends on C191, which acts as the Thioimide intermediate. D198 serves as the catalytic Proton donor. 230 to 231 (HE) is a substrate binding site. NADPH is bound at residue 259 to 260 (RG).

Belongs to the GTP cyclohydrolase I family. QueF type 2 subfamily. In terms of assembly, homodimer.

The protein localises to the cytoplasm. It catalyses the reaction 7-aminomethyl-7-carbaguanine + 2 NADP(+) = 7-cyano-7-deazaguanine + 2 NADPH + 3 H(+). It functions in the pathway tRNA modification; tRNA-queuosine biosynthesis. Functionally, catalyzes the NADPH-dependent reduction of 7-cyano-7-deazaguanine (preQ0) to 7-aminomethyl-7-deazaguanine (preQ1). This chain is NADPH-dependent 7-cyano-7-deazaguanine reductase, found in Legionella pneumophila (strain Lens).